A 343-amino-acid chain; its full sequence is Heat-inducible transcription repressor HrcA (343 aa).

The protein belongs to the HrcA family.

In terms of biological role, negative regulator of class I heat shock genes (grpE-dnaK-dnaJ and groELS operons). Prevents heat-shock induction of these operons. The polypeptide is Heat-inducible transcription repressor HrcA (Mycoplasma genitalium (strain ATCC 33530 / DSM 19775 / NCTC 10195 / G37) (Mycoplasmoides genitalium)).